We begin with the raw amino-acid sequence, 262 residues long: Adenosylcobinamide-GDP ribazoletransferase (262 aa).

5 consecutive transmembrane segments (helical) span residues 41 to 61 (AFPLAAILITLPAAAIAFILG), 65 to 85 (ASSLFSAFLVVAVQAMVTGAL), 115 to 132 (IGTYGAVALILSFGLRVS), 134 to 156 (LAAFLPLLTPTGGGIALLATAAL), and 195 to 215 (GVLLALVLFFLAGIPTVAVWL).

This sequence belongs to the CobS family. Mg(2+) serves as cofactor.

The protein resides in the cell inner membrane. The catalysed reaction is alpha-ribazole + adenosylcob(III)inamide-GDP = adenosylcob(III)alamin + GMP + H(+). It catalyses the reaction alpha-ribazole 5'-phosphate + adenosylcob(III)inamide-GDP = adenosylcob(III)alamin 5'-phosphate + GMP + H(+). It participates in cofactor biosynthesis; adenosylcobalamin biosynthesis; adenosylcobalamin from cob(II)yrinate a,c-diamide: step 7/7. Joins adenosylcobinamide-GDP and alpha-ribazole to generate adenosylcobalamin (Ado-cobalamin). Also synthesizes adenosylcobalamin 5'-phosphate from adenosylcobinamide-GDP and alpha-ribazole 5'-phosphate. The chain is Adenosylcobinamide-GDP ribazoletransferase from Rhizobium meliloti (strain 1021) (Ensifer meliloti).